We begin with the raw amino-acid sequence, 128 residues long: Probable 4-amino-4-deoxy-L-arabinose-phosphoundecaprenol flippase subunit ArnF (128 aa).

The Cytoplasmic portion of the chain corresponds to 1–2 (MC). Residues 3-23 (LIWGLFSVIIASVAQLSLGFA) form a helical membrane-spanning segment. Over 24-35 (ASHLPPMTHLWD) the chain is Periplasmic. Residues 36–56 (FIAALLAFGLDARILLLGLLG) form a helical membrane-spanning segment. At 57–76 (YLLSVFCWYKTLHKLALSKA) the chain is on the cytoplasmic side. A helical transmembrane segment spans residues 77 to 97 (YALLSMSYVLVWIASMVLPGW). At 98 to 100 (EGT) the chain is on the periplasmic side. Residues 101-121 (FSLKALLGVACIMSGLMLIFL) form a helical membrane-spanning segment. Residues 122-128 (PTTKQRY) lie on the Cytoplasmic side of the membrane.

It belongs to the ArnF family. In terms of assembly, heterodimer of ArnE and ArnF.

The protein resides in the cell inner membrane. Its pathway is bacterial outer membrane biogenesis; lipopolysaccharide biosynthesis. In terms of biological role, translocates 4-amino-4-deoxy-L-arabinose-phosphoundecaprenol (alpha-L-Ara4N-phosphoundecaprenol) from the cytoplasmic to the periplasmic side of the inner membrane. The protein is Probable 4-amino-4-deoxy-L-arabinose-phosphoundecaprenol flippase subunit ArnF of Shigella flexneri.